A 154-amino-acid polypeptide reads, in one-letter code: Ribonuclease H (154 aa).

One can recognise an RNase H type-1 domain in the interval 1 to 142 (MLKQVEIFTD…CDELARRAAG (142 aa)). Mg(2+) contacts are provided by D10, E48, D70, and D134.

This sequence belongs to the RNase H family. Monomer. It depends on Mg(2+) as a cofactor.

Its subcellular location is the cytoplasm. The catalysed reaction is Endonucleolytic cleavage to 5'-phosphomonoester.. Endonuclease that specifically degrades the RNA of RNA-DNA hybrids. The sequence is that of Ribonuclease H from Edwardsiella ictaluri (strain 93-146).